A 490-amino-acid chain; its full sequence is GTPase Der (490 aa).

2 EngA-type G domains span residues 3-166 (PVVA…MDDV) and 203-376 (IKLA…DSST). GTP contacts are provided by residues 9–16 (GRPNVGKS), 56–60 (DTGGI), 118–121 (NKTD), 209–216 (GRPNVGKS), 256–260 (DTAGV), and 321–324 (NKWD). The region spanning 377–461 (RRVSTAMLTR…PIRIQFKEGE (85 aa)) is the KH-like domain.

This sequence belongs to the TRAFAC class TrmE-Era-EngA-EngB-Septin-like GTPase superfamily. EngA (Der) GTPase family. In terms of assembly, associates with the 50S ribosomal subunit.

Functionally, GTPase that plays an essential role in the late steps of ribosome biogenesis. This is GTPase Der from Salmonella newport (strain SL254).